The chain runs to 122 residues: Small ribosomal subunit protein uS13 (122 aa).

Positions 94–122 are disordered; it reads GLPVRGQVTQKNARTRKGPRKTVAGKKGK. The segment covering 106 to 122 has biased composition (basic residues); the sequence is ARTRKGPRKTVAGKKGK.

Belongs to the universal ribosomal protein uS13 family. In terms of assembly, part of the 30S ribosomal subunit. Forms a loose heterodimer with protein S19. Forms two bridges to the 50S subunit in the 70S ribosome.

Its function is as follows. Located at the top of the head of the 30S subunit, it contacts several helices of the 16S rRNA. In the 70S ribosome it contacts the 23S rRNA (bridge B1a) and protein L5 of the 50S subunit (bridge B1b), connecting the 2 subunits; these bridges are implicated in subunit movement. Contacts the tRNAs in the A and P-sites. The polypeptide is Small ribosomal subunit protein uS13 (Mycoplasma mobile (strain ATCC 43663 / 163K / NCTC 11711) (Mesomycoplasma mobile)).